A 231-amino-acid chain; its full sequence is MRVLVKLSGEALSGEGGRGFDPERVNYIVTEIKSVVEEGFKIGIVVGAGNLFRGVELKNLTMARADQIGLLGTVMNSVYLKDIFERSGLKARIYSQIVNLPDVERVNYDSIESALRENSILIFAGGTSNPFFTTDTAAVLRAQEMKAKLVVKATKVDGVYDKDPKKFPDAKKIPHLTFSEAMKMGLKVMDAEAFALCKKLGITVKVINFFEPGTLLKALKGEDVGSTVVPD.

Residue 6–9 participates in ATP binding; that stretch reads KLSG. The segment at 14–19 is involved in allosteric activation by GTP; sequence GEGGRG. 2 residues coordinate ATP: G49 and R53. Residues D66 and 127-134 each bind UMP; that span reads TSNPFFTT. Residues T154, Y160, and D163 each coordinate ATP.

Belongs to the UMP kinase family. Homohexamer.

The protein localises to the cytoplasm. The catalysed reaction is UMP + ATP = UDP + ADP. It functions in the pathway pyrimidine metabolism; CTP biosynthesis via de novo pathway; UDP from UMP (UMPK route): step 1/1. Its activity is regulated as follows. Allosterically activated by GTP. Inhibited by UTP. In terms of biological role, catalyzes the reversible phosphorylation of UMP to UDP. This chain is Uridylate kinase, found in Thermotoga petrophila (strain ATCC BAA-488 / DSM 13995 / JCM 10881 / RKU-1).